The chain runs to 1826 residues: MRPGCDLLLRAAATVTAAIMSDSDSEEDSSGGGPFTLAGILFGNISGAGQLEGESVLDDECKKHLAGLGALGLGSLITELTANEELTGTGGALVNDEGWIRSTEDAVDYSDINEVAEDESQRHQQTMGSLQPLYHSDYDEDDYDADCEDIDCKLMPPPPPPPGPMKKDKDQDAITCVSESGEDIILPSIIAPSFLASEKVDFSSYSDSESEMGPQEATQAESEDGKLTLPLAGIMQHDATKLLPSVTELFPEFRPGKVLRFLHLFGPGKNVPSVWRSARRKRKKHRELIQEEQIQEVECSVESEVSQKSLWNYDYAPPPPPEQCLADDEITMMVPVESKFSQSTGDVDKVTDTKPRVAEWRYGPARLWYDMLGVSEDGSGFDYGFKLRKTQHEPVIKSRMMEEFRKLEESNGTDLLADENFLMVTQLHWEDSIIWDGEDIKHKGTKPQGASLAGWLPSIKTRNVMAYNVQQGFAPTLDDDKPWYSIFPIDNEDLVYGRWEDNIIWDAQAMPRLLEPPVLALDPNDENLILEIPDEKEEATSNSPSKESKKESSLKKSRILLGKTGVIREEPQQNMSQPEVKDPWNLSNDEYYFPKQQGLRGTFGGNIIQHSIPAMELWQPFFPTHMGPIKIRQFHRPPLKKYSFGALSQPGPHSVQPLLKHIKKKAKMREQERQASGGGELFFMRTPQDLTGKDGDLILAEYSEENGPLMMQVGMATKIKNYYKRKPGKDPGAPDCKYGETVYCHTSPFLGSLHPGQLLQALENNLFRAPVYLHKMPETDFLIIRTRQGYYIRELVDIFVVGQQCPLFEVPGPNSRRANMHIRDFLQVFIYRLFWKSKDRPRRIRMEDIKKAFPSHSESSIRKRLKLCADFKRTGMDSNWWVLKSDFRLPTEEEIRAKVSPEQCCAYYSMIAAKQRLKDAGYGEKSFFAPEEENEEDFQMKIDDEVHAAPWNTTRAFIAAMKGKCLLEVTGVADPTGCGEGFSYVKIPNKPTQQKDDKEPQAVKKTVTGTDADLRRLSLKNAKQLLRKFGVPEEEIKKLSRWEVIDVVRTMSTEQAHSGEGPMSKFARGSRFSVAEHQERYKEECQRIFDLQNKVLSSTEVLSTDTDSISAEDSDFEEMGKNIENMLQNKKTSSQLSREWEEQERKELRRMLLVAGSAASGNNHRDDVTASMTSLKSSATGHCLKIYRTFRDEEGKEYVRCETVRKPAVIDAYVRIRTTKDEKFIQKFALFDEKHREEMRKERRRIQEQLRRLKRNQEKEKLKGPPEKKPKKMKERPDLKLKCGACGAIGHMRTNKFCPLYYQTNVPPSKPVAMTEEQEEELEKTVIHNDNEELIKVEGTKIVFGKQLIENVHEVRRKSLVLKFPKQQLPPKKKRRVGTTVHCDYLNIPHKSIHRRRTDPMVTLSSILESIINDMRDLPNTHPFHTPVNAKVVKDYYKIITRPMDLQTLRENVRKCLYPSREEFREHLELIVKNSATYNGPKHSLTQISQSMLDLCDEKLKEKEDKLARLEKAINPLLDDDDQVAFSFILDNIVTQKMMAVPDSWPFHHPVNKKFVPDYYKMIVNPVDLETIRKNISKHKYQSRESFLDDVNLILANSVKYNGPESQYTKTAQEIVNICYQTITEYDEHLTQLEKDICTAKEAALEEAELESLDPMTPGPYTSQPPDMYDTNTSLSTSRDASVFQDESNLSVLDISTATPEKQMCQGQGRLGEEDSDVDVEGYDDEEEDGKPKPPAPEGGDGDLADEEEGTVQQPEASVLYEDLLISEGEDDEEDAGSDEEGDNPFSAIQLSESGSDSDVGYGGIRPKQPFMLQHASGEHKDGHGK.

Disordered regions lie at residues 118–141, 532–555, and 1252–1276; these read DESQRHQQTMGSLQPLYHSDYDED, IPDEKEEATSNSPSKESKKESSLK, and RLKRNQEKEKLKGPPEKKPKKMKER. Over residues 1252-1268 the composition is skewed to basic and acidic residues; sequence RLKRNQEKEKLKGPPEK. Positions 1370 to 1377 match the Nuclear localization signal motif; that stretch reads PPKKKRRV. Bromo domains lie at 1395-1503 and 1517-1626; these read RRRT…LKEK and LLDD…ITEY. Positions 1648-1826 are disordered; it reads AELESLDPMT…SGEHKDGHGK (179 aa). Residues 1660-1700 are compositionally biased toward polar residues; that stretch reads PYTSQPPDMYDTNTSLSTSRDASVFQDESNLSVLDISTATP. 3 stretches are compositionally biased toward acidic residues: residues 1714-1729, 1740-1750, and 1768-1783; these read EDSDVDVEGYDDEEED, GDGDLADEEEG, and EGEDDEEDAGSDEEGD. Residues 1787–1797 are compositionally biased toward polar residues; that stretch reads SAIQLSESGSD. Residues 1817-1826 are compositionally biased toward basic and acidic residues; the sequence is SGEHKDGHGK.

This sequence belongs to the TAF1 family. As to quaternary structure, can bind directly to TATA-box binding protein (TBP). Interacts (via bromo domains) with acetylated lysine residues on the N-terminus of histone H1.4, H2A, H2B, H3 and H4 (in vitro). Testis specific, expressed apparently in germ cells.

The protein resides in the nucleus. In terms of biological role, may act as a functional substitute for TAF1/TAFII250 during male meiosis, when sex chromosomes are transcriptionally silenced. This is Transcription initiation factor TFIID subunit 1-like (TAF1L) from Homo sapiens (Human).